A 342-amino-acid chain; its full sequence is (Lyso)-N-acylphosphatidylethanolamine lipase (342 aa).

Residues 70 to 323 form the AB hydrolase-1 domain; sequence PLVMVHGFGG…EIEGASHHVY (254 aa).

This sequence belongs to the peptidase S33 family. ABHD4/ABHD5 subfamily. As to expression, highest levels in the CNS and in testis, intermediate levels in liver and kidney. Hardly detectable in heart.

The catalysed reaction is N-hexadecanoyl-1,2-di-(9Z-octadecenoyl)-sn-glycero-3-phosphoethanolamine + H2O = N-hexadecanoyl-1-(9Z-octadecenoyl)-sn-glycero-3-phosphoethanolamine + (9Z)-octadecenoate + H(+). It catalyses the reaction an N-acyl-1,2-diacyl-sn-glycero-3-phosphoethanolamine + H2O = N,1-diacyl-sn-glycero-3-phosphoethanolamine + a fatty acid + H(+). It carries out the reaction N-hexadecanoyl-1-(9Z-octadecenoyl)-sn-glycero-3-phosphoethanolamine + H2O = N-hexadecanoyl-sn-glycero-3-phosphoethanolamine + (9Z)-octadecenoate + H(+). The enzyme catalyses N-octadecanoyl-1-(9Z-octadecenoyl)-sn-glycero-3-phosphoethanolamine + H2O = N-octadecanoyl-sn-glycero-3-phospho-ethanolamine + (9Z)-octadecenoate + H(+). The catalysed reaction is N-eicosanoyl-1-(9Z-octadecenoyl)-sn-glycero-3-phosphoethanolamine + H2O = N-eicosanoyl-sn-glycero-3-phosphoethanolamine + (9Z)-octadecenoate + H(+). It catalyses the reaction N,1-di-(9Z-octadecenoyl)-sn-glycero-3-phosphoethanolamine + H2O = N-(9Z-octadecenoyl)-sn-glycero-3-phosphoethanolamine + (9Z)-octadecenoate + H(+). It carries out the reaction N-(5Z,8Z,11Z,14Z-eicosatetraenoyl)-1-(9Z-octadecenoyl)-sn-glycero-3-phosphoethanolamine + H2O = N-(5Z,8Z,11Z,14Z-eicosatetraenoyl)-sn-glycero-3-phosphoethanolamine + (9Z)-octadecenoate + H(+). The enzyme catalyses 1-octadecanoyl-2-(9Z-octadecenoyl)-sn-glycero-3-phospho-(N-hexadecanoyl)-serine + H2O = 1-octadecanoyl-2-hydroxy-sn-glycero-3-phospho-(N-hexadecanoyl)-serine + (9Z)-octadecenoate + H(+). The catalysed reaction is 1-O-(1Z-octadecenoyl)-2-(9Z-octadecenoyl)-sn-glycero-3-phospho-N-hexadecanoyl-ethanolamine + H2O = 1-O-(1Z-octadecenyl)-sn-glycero-3-phospho-N-hexadecanoyl-ethanolamine + (9Z)-octadecenoate + H(+). It catalyses the reaction N,1-diacyl-sn-glycero-3-phosphoethanolamine + H2O = N-acyl-sn-glycero-3-phosphoethanolamine + a fatty acid + H(+). Lysophospholipase selective for N-acyl phosphatidylethanolamine (NAPE). Contributes to the biosynthesis of N-acyl ethanolamines, including the endocannabinoid anandamide by hydrolyzing the sn-1 and sn-2 acyl chains from N-acyl phosphatidylethanolamine (NAPE) generating glycerophospho-N-acyl ethanolamine (GP-NAE), an intermediate for N-acyl ethanolamine biosynthesis. Hydrolyzes substrates bearing saturated, monounsaturated, polyunsaturated N-acyl chains. Shows no significant activity towards other lysophospholipids, including lysophosphatidylcholine, lysophosphatidylethanolamine and lysophosphatidylserine. This Mus musculus (Mouse) protein is (Lyso)-N-acylphosphatidylethanolamine lipase.